Here is a 353-residue protein sequence, read N- to C-terminus: Alanine racemase (353 aa).

Catalysis depends on lysine 33, which acts as the Proton acceptor; specific for D-alanine. Position 33 is an N6-(pyridoxal phosphate)lysine (lysine 33). Arginine 129 contacts substrate. Residue tyrosine 250 is the Proton acceptor; specific for L-alanine of the active site. Methionine 298 is a substrate binding site.

It belongs to the alanine racemase family. Pyridoxal 5'-phosphate serves as cofactor.

It carries out the reaction L-alanine = D-alanine. It functions in the pathway amino-acid biosynthesis; D-alanine biosynthesis; D-alanine from L-alanine: step 1/1. In terms of biological role, catalyzes the interconversion of L-alanine and D-alanine. May also act on other amino acids. The polypeptide is Alanine racemase (alr) (Aromatoleum aromaticum (strain DSM 19018 / LMG 30748 / EbN1) (Azoarcus sp. (strain EbN1))).